The following is an 873-amino-acid chain: F-BAR domain only protein 1 (873 aa).

Residues 1-248 enclose the F-BAR domain; it reads MSYFGEHFWG…NVENVTVDML (248 aa). The segment at 1-275 is mediates membrane-binding; it reads MSYFGEHFWG…LDFDAYSSAA (275 aa). Residues 153–172 form a disordered region; that stretch reads RENTSQKEMDKAETKSKKAA. Residues 155–178 are a coiled coil; it reads NTSQKEMDKAETKSKKAADSLRRS. The mediates interaction with the adaptor protein complex AP-2 stretch occupies residues 267–439; it reads DFDAYSSAAL…KSLFGPPLES (173 aa). Residues Ser-295, Ser-343, and Ser-368 each carry the phosphoserine modification. Positions 302–347 are disordered; that stretch reads SVDFLESDSGVPPEVDDEGFTVRPDISQNNGAEPPRFSSSDSDFDD. Disordered regions lie at residues 381 to 600 and 813 to 833; these read GSLI…RGPS and SGHL…SPVA. Residues 447–466 show a composition bias toward low complexity; it reads TGSSSLGFTSSPSPFSSSSP. Ser-518 is modified (phosphoserine). A compositionally biased stretch (low complexity) spans 567–576; it reads SLSPSPLGSS. The segment at 593 to 873 is mediates interaction with AGFG1, CALM, DAB2, EPS15, EPS15R, ITSN1 and clathrin; that stretch reads HGISRGPSPV…FATGMYLVSC (281 aa). Ser-600 carries the phosphoserine modification. In terms of domain architecture, MHD spans 609 to 872; that stretch reads ALPVATAFTE…RFATGMYLVS (264 aa). Polar residues predominate over residues 816–827; that stretch reads LSASWQPQSGPS.

The protein belongs to the FCHO family. As to quaternary structure, may oligomerize and form homotetramer. Interacts with AP2A2 and AP2B1; 2 subunits of the adaptor protein complex AP-2. Interacts with DAB2. Interacts with clathrin (CLTC or CLTCL1). Interacts with EPS15, EPS15R and ITSN1. Interacts with AGFG1 and CALM. May interact with ACVR1; linking this receptor to clathrin-mediated endocytosis. Mainly detected in brain and spleen.

It is found in the membrane. The protein resides in the clathrin-coated pit. Functionally, functions in an early step of clathrin-mediated endocytosis. Has both a membrane binding/bending activity and the ability to recruit proteins essential to the formation of functional clathrin-coated pits. May regulate Bmp signaling by regulating clathrin-mediated endocytosis of Bmp receptors. Involved in the regulation of T-cell poliferation and activation. Affects TCR clustering upon receptor triggering and modulates its internalisation, playing a role in TCR-dependent T-cell activation. The protein is F-BAR domain only protein 1 of Mus musculus (Mouse).